Reading from the N-terminus, the 712-residue chain is Zinc finger and BTB domain-containing protein 39 (712 aa).

The region spanning 30–96 is the BTB domain; sequence CDVTIVVGSR…VYTSELFTDL (67 aa). Disordered stretches follow at residues 129-162, 176-224, and 236-260; these read ARAKPLTSTSESHSGTLSCPSAEPAHPLGELRGG, SDAG…IPSM, and GIQTSTSSCQPYKVQSNGDFSKNSF. Polar residues predominate over residues 134-147; it reads LTSTSESHSGTLSC. Residue lysine 183 forms a Glycyl lysine isopeptide (Lys-Gly) (interchain with G-Cter in SUMO2) linkage. The C2H2-type 1 zinc-finger motif lies at 372 to 394; sequence GNCKVCETHFQDRNSRVTHVLSH. The C2H2-type 2; atypical zinc-finger motif lies at 400 to 422; that stretch reads FSCDMCETKFFTQWQLTLHRRDG. Lysine 439 is covalently cross-linked (Glycyl lysine isopeptide (Lys-Gly) (interchain with G-Cter in SUMO2)). The C2H2-type 3; atypical zinc finger occupies 480–502; sequence QACSVCDQRHLNLCSLMWHTLSH. C2H2-type zinc fingers lie at residues 508–530, 538–560, 605–627, and 633–655; these read FSCSVCANSFVDWHLLEKHMAVH, FHCRLCSQSFKSEAAYRYHVSQH, YSCKVCGKRFAHTSEFNYHRRIH, and YQCKVCHKFFRGRSTIKCHLKTH. The segment at 661–683 adopts a C2H2-type 8; atypical zinc-finger fold; it reads YRCTVCGHYSSTLNLMSKHVGVH.

This sequence belongs to the krueppel C2H2-type zinc-finger protein family.

The protein resides in the nucleus. Functionally, may be involved in transcriptional regulation. The protein is Zinc finger and BTB domain-containing protein 39 (ZBTB39) of Homo sapiens (Human).